The sequence spans 160 residues: Major strawberry allergen Fra a 1-D (160 aa).

It belongs to the BetVI family. In terms of assembly, monomer.

The chain is Major strawberry allergen Fra a 1-D from Fragaria ananassa (Strawberry).